The primary structure comprises 202 residues: Ribosomal RNA small subunit methyltransferase G (202 aa).

Residues glycine 75, phenylalanine 80, 125–126 (VQ), and arginine 139 contribute to the S-adenosyl-L-methionine site.

The protein belongs to the methyltransferase superfamily. RNA methyltransferase RsmG family.

Its subcellular location is the cytoplasm. Its function is as follows. Specifically methylates the N7 position of a guanine in 16S rRNA. This chain is Ribosomal RNA small subunit methyltransferase G, found in Mesomycoplasma hyopneumoniae (strain J / ATCC 25934 / NCTC 10110) (Mycoplasma hyopneumoniae).